The following is a 347-amino-acid chain: NADH-ubiquinone oxidoreductase chain 2 (347 aa).

The next 11 helical transmembrane spans lie at 1 to 21, 25 to 45, 59 to 79, 96 to 116, 127 to 147, 149 to 169, 178 to 198, 200 to 220, 247 to 267, 276 to 296, and 325 to 345; these read MNPL…AIVM, HWLT…PMLM, YFLT…MNLT, IIMT…FWVP, CLIL…MISP, INLN…GWGG, IMAY…AYNP, MTML…MLLI, IMLS…WMII, IIMP…YMRL, and LLSP…MMSL.

The protein belongs to the complex I subunit 2 family. As to quaternary structure, core subunit of respiratory chain NADH dehydrogenase (Complex I) which is composed of 45 different subunits. Interacts with TMEM242.

It is found in the mitochondrion inner membrane. The catalysed reaction is a ubiquinone + NADH + 5 H(+)(in) = a ubiquinol + NAD(+) + 4 H(+)(out). Functionally, core subunit of the mitochondrial membrane respiratory chain NADH dehydrogenase (Complex I) which catalyzes electron transfer from NADH through the respiratory chain, using ubiquinone as an electron acceptor. Essential for the catalytic activity and assembly of complex I. The polypeptide is NADH-ubiquinone oxidoreductase chain 2 (Natalus stramineus (Mexican funnel-eared bat)).